We begin with the raw amino-acid sequence, 296 residues long: Phosphoribosylaminoimidazole-succinocarboxamide synthase (296 aa).

The protein belongs to the SAICAR synthetase family.

The enzyme catalyses 5-amino-1-(5-phospho-D-ribosyl)imidazole-4-carboxylate + L-aspartate + ATP = (2S)-2-[5-amino-1-(5-phospho-beta-D-ribosyl)imidazole-4-carboxamido]succinate + ADP + phosphate + 2 H(+). It functions in the pathway purine metabolism; IMP biosynthesis via de novo pathway; 5-amino-1-(5-phospho-D-ribosyl)imidazole-4-carboxamide from 5-amino-1-(5-phospho-D-ribosyl)imidazole-4-carboxylate: step 1/2. In Geobacter sp. (strain M21), this protein is Phosphoribosylaminoimidazole-succinocarboxamide synthase.